The primary structure comprises 128 residues: SLILLVAVQALTEEDLQLLRQTSAECKTESGASEAVIKKARKGDLEDDPKLKMQLLCIFKALEIVAESGEIEADTFKEKLTRVTNDDEESEKIVEKCTVTEDTPEDTAFEVTKCVLKDKPNFFGDLFV.

The N-terminal stretch at 1–10 is a signal peptide; it reads SLILLVAVQA. Disulfide bonds link C26–C57 and C97–C114.

Belongs to the PBP/GOBP family. In terms of processing, N-glycosylated. Tubular accessory sex gland.

The protein localises to the secreted. In terms of biological role, may be a carrier protein for lipids. In Tenebrio molitor (Yellow mealworm beetle), this protein is B2 protein.